Consider the following 301-residue polypeptide: 4-diphosphocytidyl-2-C-methyl-D-erythritol kinase (301 aa).

Residue lysine 10 is part of the active site. An ATP-binding site is contributed by 96–106 (PMGGGVGGGSS). The active site involves aspartate 138.

This sequence belongs to the GHMP kinase family. IspE subfamily.

The enzyme catalyses 4-CDP-2-C-methyl-D-erythritol + ATP = 4-CDP-2-C-methyl-D-erythritol 2-phosphate + ADP + H(+). The protein operates within isoprenoid biosynthesis; isopentenyl diphosphate biosynthesis via DXP pathway; isopentenyl diphosphate from 1-deoxy-D-xylulose 5-phosphate: step 3/6. Functionally, catalyzes the phosphorylation of the position 2 hydroxy group of 4-diphosphocytidyl-2C-methyl-D-erythritol. This is 4-diphosphocytidyl-2-C-methyl-D-erythritol kinase from Alcanivorax borkumensis (strain ATCC 700651 / DSM 11573 / NCIMB 13689 / SK2).